The sequence spans 928 residues: Chitin synthase 2 (928 aa).

2 disordered regions span residues 1–45 and 110–179; these read MAYN…EAYA and AYYT…SPAP. Polar residues predominate over residues 17–28; the sequence is PSAQPQYDSRSP. Residues 130–140 are compositionally biased toward basic and acidic residues; the sequence is PSHDEPYRPDT. 9 helical membrane passes run 472 to 492, 570 to 589, 613 to 633, 644 to 664, 678 to 698, 723 to 743, 753 to 773, 854 to 874, and 893 to 913; these read SAFG…YVAL, WLNG…YQLW, LFAW…TASL, TVLG…CFIL, MMMV…SIFL, FFGL…ASFL, CFLQ…IYAF, VTAW…IAGF, and VILW…CWFL.

The protein belongs to the chitin synthase family. Class I subfamily.

It localises to the cell membrane. It catalyses the reaction [(1-&gt;4)-N-acetyl-beta-D-glucosaminyl](n) + UDP-N-acetyl-alpha-D-glucosamine = [(1-&gt;4)-N-acetyl-beta-D-glucosaminyl](n+1) + UDP + H(+). Functionally, polymerizes chitin, a structural polymer of the cell wall and septum, by transferring the sugar moiety of UDP-GlcNAc to the non-reducing end of the growing chitin polymer. CHS2 plays a synergistic role to CHS1 in normal yeast cell reproductive growth, even if this role is less predominant than for CHS1. With CHS3, plays an important role in virulence. The protein is Chitin synthase 2 of Exophiala dermatitidis (Black yeast-like fungus).